The chain runs to 3179 residues: MKTQTLSLMNINGKRKFLGTNNKIYRKVIINPTSEDDIQKFCRNYFRIYNFSLYNFIRRLISFDAILVYSLFLTVYIFSEINHGETKKYLFIDTAISLFFNIILLIVIESLFELKKLKDVKNANSQYYLRIVPKMSYFEKVMTKDIKVGNIIRIFQGDEFPADVVILYVKNNANAIVDSFKIDGLFRKSIKYAVDKYKIDKDYLKMLSEINGVIRCELPNKNIFCFQGNFKLDKHPRSLLLNYENFALQSSVLKGAEYIDAVVVYTGADTKKNLNIPQKIEENKTFCIKMNNIVYYLIFMYFVFVVLSIVIKTIFFHKKNSFQNSRDSFLSMLEDFVGLYILVLPIMMYSEKSLIYIIQSLRIENDLRMRNTDSEKPKVFNKNKNDSLGNVDLLATSRNGVLVKRKELLVSCVINNVMYGKKDIICSRTNFKLPTLNILDSERKNVSNLLNLDERIFKDPENIFFPTRDFYSFLKLFENKISSIYNPYSSSLSNLLKEKYKNYVNEEILNKNVKLTSFVKSQLTIGYNQICEDDELSYNCYEIKEDSQKENIQSVKIEDFILGLCGCNRIIIYNEKSLDISMNEYKSDNFMETYSKFETENEEYHENDHDEYHNMEHSDDENINSIEYEDICLYNIIRNTGFSIYCYKNTLFLYNLMKECKVYFLTCYHDFLRSNKFSMCILKCGYSINNEKEGGILYVRGYDFNILPYISKEKNNIKKIKNVIKIYTLNYLKVIILCKKQISNEDIAKYIILKSISKKLSFKFYDLIKLFFLYDLEVIGIIGLKNQLREGVKETFNDVINFDIKSWIFANECSKDTYLTALQCNLIVSSSNLFLINYYNLKNTHEEGANILFHNFISSLYKLKSNSYAVVINDESIKNIMTNVESMKIFLCIAMRATVVLFCKLQNETKGKIIRTLYALTSPKLTVLGIGTTLNDAYLLKYSSISVFLSLNEHVNILYNISDYVLQEFKFISELLILGRLNRFSLCKVFLWIIYLKITVVSFYFFHNFDNYFSGSSASSILYTQTTFALLHYFLIIAFSAYEIDLPYKFVRRLPYIYQLSRRKYFLNNNIILLTIIEAILISLTSYYILRLNVFHLITHREFTFHIFILNVFITTEKILLLSKTWHIYFFIMAVLIIGILLIYVNIFTLVDCIKNGKCEFSLFQMENIYFWTSLFPILYINFIFDKLMKYIKNRIYPDISDYLRKYFLRRICCHNNDKFLSQRKIKGINKFVNFEKNDILLKYIPTPKIYKIKDDPTYYNKSKRSKFLYDTFRKVIDINVKYRNQQLNLEYKTYEKGNKLKLRIIVILLFLIYIIIFSSQTIIDINTKSNIHYITMFYIIYFVLACVLLIYIRIRNKATSTFFFFLSRFLLICGFCIELYDNISNDILNVLITYSFTVSYIFFMSFKILEALLVCISILLLTFGVYYEKNKNMIDICTHFCSNPYLSINNLDHMNISCLCKKQIVIFLISLLSFTLICLSMKYYEIFYLKKKFLFRYKQKVNLAKQIEILHTMLPNFLVEYLLISDPKNDGIMVGKNISGEDRGIISVIFCDIDDFQNMVSTLQPHVLVETLDNLYLYFDKCIKYFNCIKIETVFESYLAASGLSEKKNNALDKIMYDTKCAIKLAIAQLSAKYYISYKVLDTREHFSDNSTSYDKYINKNISLKIGIHTGKAISGVIGSVKPQYALFGDTVNTASRMKSTSLPDHIHVSYDTYKYLKEDNTFIWKERKVFIKGKGKMKTYLLVDILDDVKRKGESLNYYSSSNLLLSQLGSEAVSIYEEREDIKEGSMDIIKESSRDIIKEDSRDIIKEISTNISKSSSRNISKSSSRSISDIKEGQIIDKEDLIFKINRMKNKIDSRYSKRIDKESRDKISDKTNHVLDEVVKHSDIHLLNYEINNKRCKKMKGDTNNENKLIGDIFNMYDKKIKYIYKKNYKSKSMENISFIKHYRNTKYKKSDYLLLDNKGESKKFKRNTSYVLESPLHLIGDIVDNNIKRKKKKKEIKTIVSDDMFTSPVNIKEYNYNEQERKKEIVGNLSYDKTKKIFPFIKFTKEGRIKKKKIEKKEKKEKKENNNNFLYNDDYSSYSSPKYGDNENNFVIKYIRERKDFQKKFDHPNFNFSKFLHNYNPMKNKNKNKKNNKNVRRNEYPNYTSSSKDGVSYNFLSDSLFSSDNEYSSDNEYSSDSEKYYKKRFKKNKKIIKFDDLFTKIYIKKKRLLQMNNYDVKGKGKKLKNKGMERNKTKYKNVNEITKMKYFVNNENRDHEVNKEDISKSMQKYFLHISKHKKEQIEDKKKTHKYFHKNVECVYPYAGNNINHNFSRNEKRKYSINLYDHLDEQEKIKGKKKYFNKDKELIGSINKQTERKPKKKNKKNIENKKDKKKIRMITNKTKEKHSNSIISVEEQNMNHNNSLKKKEVNFTGKNEEYLNRANTNCSLGIKEMEEDVYEFHSNNIYYNNQTSYSDDINNTTKLKGMGNNTNDISKNKGKNKLGKKISFFSMNNKYHESEIMNEEDNKNMLNLTQSQIINKDKYNYFTHCPSLKKKKSVFTKINNLFKNYFKSIDVHEKFGFSKKFKFHSKDSDDIKGNNNKISKNRYNNNNNNNNSNYSNIDSGKYSHNNKKNHHHNNNKYHHHNNNKYHHHNNNKYHHQNNNYEKHHHSNNSRVMLSKGEKTEKNENVDYAYQFDNYDKKLLKKLTSNLQLNKKNVKNFNMFYYKFNDEELEEEYTRNYYREIINIDLTKKLIIIFIFTEIFLSLCNIIELSFYEKKLRYNDSIVIIWLIRSIYLFIITYIWIILKTKLKEYKNNSSKMMWTIFILNIFLCSWGIILIDLSCIHYSMLLGNKNERALFFMKDASELIICIQLIFIKNMLFKHKFFFFVFFYIFLIYSFSKLFSIHTCQTHICCSIILFISINILYFWYSEYLDRIQFLVKRKRNRMEKISQDFLTKILPRQVLEEYQNDNLQLTYKHEKIAFLFADIVGFTKWSKTVSPKEVLKLLQKLISKIDKDTIKLGLYKLFTIGDAYVATSQPNSSITDESEALEGILNILKLAKLILHNINTIKIQFNKHDFNMRIGLHYGSCVGGIIGSVRIRYDMWGLDVLIANKIESNGIPGEIICSEQFRHFFIQNEPQAKLNFWYYKSISINDQDIKLYVIEDKNYEEDYDPKVIDYTTLLKLRQKKGLRS.

At 1–60 the chain is on the cytoplasmic side; it reads MKTQTLSLMNINGKRKFLGTNNKIYRKVIINPTSEDDIQKFCRNYFRIYNFSLYNFIRRL. The helical transmembrane segment at 61–81 threads the bilayer; that stretch reads ISFDAILVYSLFLTVYIFSEI. Over 82–88 the chain is Extracellular; that stretch reads NHGETKK. Residues 89–109 traverse the membrane as a helical segment; sequence YLFIDTAISLFFNIILLIVIE. Topologically, residues 110–295 are cytoplasmic; it reads SLFELKKLKD…FCIKMNNIVY (186 aa). A helical transmembrane segment spans residues 296-316; that stretch reads YLIFMYFVFVVLSIVIKTIFF. The Extracellular segment spans residues 317–328; sequence HKKNSFQNSRDS. The chain crosses the membrane as a helical span at residues 329-349; that stretch reads FLSMLEDFVGLYILVLPIMMY. Over 350-988 the chain is Cytoplasmic; that stretch reads SEKSLIYIIQ…GRLNRFSLCK (639 aa). The helical transmembrane segment at 989 to 1009 threads the bilayer; sequence VFLWIIYLKITVVSFYFFHNF. The Extracellular segment spans residues 1010–1020; it reads DNYFSGSSASS. A helical membrane pass occupies residues 1021-1041; it reads ILYTQTTFALLHYFLIIAFSA. The Cytoplasmic segment spans residues 1042–1069; the sequence is YEIDLPYKFVRRLPYIYQLSRRKYFLNN. A helical transmembrane segment spans residues 1070–1090; the sequence is NIILLTIIEAILISLTSYYIL. The Extracellular portion of the chain corresponds to 1091–1102; sequence RLNVFHLITHRE. The helical transmembrane segment at 1103-1123 threads the bilayer; that stretch reads FTFHIFILNVFITTEKILLLS. At 1124–1127 the chain is on the cytoplasmic side; the sequence is KTWH. A helical transmembrane segment spans residues 1128 to 1148; sequence IYFFIMAVLIIGILLIYVNIF. Topologically, residues 1149–1168 are extracellular; sequence TLVDCIKNGKCEFSLFQMEN. A helical membrane pass occupies residues 1169–1189; that stretch reads IYFWTSLFPILYINFIFDKLM. Topologically, residues 1190–1304 are cytoplasmic; it reads KYIKNRIYPD…YEKGNKLKLR (115 aa). A helical transmembrane segment spans residues 1305–1325; that stretch reads IIVILLFLIYIIIFSSQTIID. Over 1326–1331 the chain is Extracellular; sequence INTKSN. The chain crosses the membrane as a helical span at residues 1332–1352; the sequence is IHYITMFYIIYFVLACVLLIY. Residues 1353–1360 lie on the Cytoplasmic side of the membrane; sequence IRIRNKAT. The chain crosses the membrane as a helical span at residues 1361 to 1381; the sequence is STFFFFLSRFLLICGFCIELY. Residues 1382-1401 lie on the Extracellular side of the membrane; the sequence is DNISNDILNVLITYSFTVSY. N-linked (GlcNAc...) asparagine glycosylation is present at Asn1383. Residues 1402–1422 form a helical membrane-spanning segment; it reads IFFMSFKILEALLVCISILLL. Residues 1423 to 1464 are Cytoplasmic-facing; it reads TFGVYYEKNKNMIDICTHFCSNPYLSINNLDHMNISCLCKKQ. The helical transmembrane segment at 1465–1485 threads the bilayer; it reads IVIFLISLLSFTLICLSMKYY. Residues 1486-1507 lie on the Extracellular side of the membrane; the sequence is EIFYLKKKFLFRYKQKVNLAKQ. The chain crosses the membrane as a helical span at residues 1508 to 1528; that stretch reads IEILHTMLPNFLVEYLLISDP. Residues 1529-2739 are Cytoplasmic-facing; the sequence is KNDGIMVGKN…IINIDLTKKL (1211 aa). The Guanylate cyclase 1 domain maps to 1548-1700; it reads SVIFCDIDDF…DTVNTASRMK (153 aa). 3 disordered regions span residues 2123–2153, 2355–2379, and 2576–2656; these read LHNY…YTSS, SINK…KDKK, and KDSD…HHHS. Residues 2131–2142 are compositionally biased toward basic residues; sequence NKNKNKKNNKNV. The span at 2584-2607 shows a compositional bias: low complexity; sequence NNNKISKNRYNNNNNNNNSNYSNI. Over residues 2614-2645 the composition is skewed to basic residues; it reads HNNKKNHHHNNNKYHHHNNNKYHHHNNNKYHH. The helical transmembrane segment at 2740–2760 threads the bilayer; it reads IIIFIFTEIFLSLCNIIELSF. Over 2761-2770 the chain is Extracellular; sequence YEKKLRYNDS. N-linked (GlcNAc...) asparagine glycosylation occurs at Asn2768. A helical transmembrane segment spans residues 2771-2791; sequence IVIIWLIRSIYLFIITYIWII. Residues 2792–2809 lie on the Cytoplasmic side of the membrane; that stretch reads LKTKLKEYKNNSSKMMWT. Residues 2810 to 2830 traverse the membrane as a helical segment; the sequence is IFILNIFLCSWGIILIDLSCI. Residues 2831–2842 lie on the Extracellular side of the membrane; that stretch reads HYSMLLGNKNER. A helical membrane pass occupies residues 2843–2863; that stretch reads ALFFMKDASELIICIQLIFIK. Over 2864 to 2870 the chain is Cytoplasmic; it reads NMLFKHK. The helical transmembrane segment at 2871 to 2891 threads the bilayer; sequence FFFFVFFYIFLIYSFSKLFSI. Topologically, residues 2892-2895 are extracellular; sequence HTCQ. The helical transmembrane segment at 2896 to 2916 threads the bilayer; that stretch reads THICCSIILFISINILYFWYS. Over 2917–3179 the chain is Cytoplasmic; the sequence is EYLDRIQFLV…KLRQKKGLRS (263 aa). In terms of domain architecture, Guanylate cyclase 2 spans 2968 to 3102; sequence AFLFADIVGF…LDVLIANKIE (135 aa). Mg(2+) is bound by residues Asp2973, Ile2974, and Asp3017.

The protein in the N-terminal section; belongs to the cation transport ATPase (P-type) (TC 3.A.3) family. Type IV subfamily. This sequence in the C-terminal section; belongs to the adenylyl cyclase class-4/guanylyl cyclase family. Mg(2+) is required as a cofactor. Mn(2+) serves as cofactor.

It is found in the membrane. It carries out the reaction GTP = 3',5'-cyclic GMP + diphosphate. Its activity is regulated as follows. Basal guanylate activity of the recombinant guanylate cyclase domains 1 and 2 is not modulated by an increase in Ca(2+) levels or by the gametogenesis inducer xanthurenic acid. Functionally, catalyzes the synthesis of the second messenger cGMP from GTP. Regulates cGMP production in gametocytes; however, is dispensable for the initiation of gametogenesis. Does not have adenylate cyclase activity. This is Guanylate cyclase beta from Plasmodium falciparum (isolate 3D7).